We begin with the raw amino-acid sequence, 1040 residues long: Multidrug resistance protein MdtB (1040 aa).

Helical transmembrane passes span 15-37 (LFIL…GIIG), 345-362 (FELM…YLFL), 367-389 (ATII…MVFL), 396-418 (LTLM…VIEN), 438-460 (GEIG…PLLF), 472-494 (FAVT…TPMM), 535-557 (HPWL…WIVI), 867-889 (VWLI…ESFI), 909-931 (LIIA…IGIV), 968-990 (ILMT…GVGT), and 1000-1022 (MVGG…YLLF).

This sequence belongs to the resistance-nodulation-cell division (RND) (TC 2.A.6) family. MdtB subfamily. In terms of assembly, part of a tripartite efflux system composed of MdtA, MdtB and MdtC. MdtB forms a heteromultimer with MdtC.

Its subcellular location is the cell inner membrane. The sequence is that of Multidrug resistance protein MdtB from Salmonella typhimurium (strain LT2 / SGSC1412 / ATCC 700720).